Reading from the N-terminus, the 1189-residue chain is Pesticidal crystal protein Cry1Ca (1189 aa).

Belongs to the delta endotoxin family.

Functionally, promotes colloidosmotic lysis by binding to the midgut epithelial cells of many lepidopteran larvae including Spodoptera species. In Bacillus thuringiensis subsp. entomocidus, this protein is Pesticidal crystal protein Cry1Ca (cry1Ca).